A 241-amino-acid polypeptide reads, in one-letter code: Transcription factor HEC1 (241 aa).

The bHLH domain maps to I128–L177.

In terms of assembly, homodimer. Interacts with SPT. Interacts with BZIP30. Flowers, especially in gynoecium.

Its subcellular location is the nucleus. Required for the female reproductive tract development and fertility. The protein is Transcription factor HEC1 (HEC1) of Arabidopsis thaliana (Mouse-ear cress).